Consider the following 206-residue polypeptide: Small ribosomal subunit protein uS4 (206 aa).

An S4 RNA-binding domain is found at 98–161; that stretch reads RRLDNVVYRL…RSMELIKNNL (64 aa).

The protein belongs to the universal ribosomal protein uS4 family. In terms of assembly, part of the 30S ribosomal subunit. Contacts protein S5. The interaction surface between S4 and S5 is involved in control of translational fidelity.

Functionally, one of the primary rRNA binding proteins, it binds directly to 16S rRNA where it nucleates assembly of the body of the 30S subunit. With S5 and S12 plays an important role in translational accuracy. The protein is Small ribosomal subunit protein uS4 of Caldanaerobacter subterraneus subsp. tengcongensis (strain DSM 15242 / JCM 11007 / NBRC 100824 / MB4) (Thermoanaerobacter tengcongensis).